Here is an 876-residue protein sequence, read N- to C-terminus: MSKSTAEIRQAFLDFFHSKGHQVVASSSLVPHNDPTLLFTNAGMNQFKDVFLGLDKRNYSRATTSQRCVRAGGKHNDLENVGYTARHHTFFEMLGNFSFGDYFKHDAIQFAWELLTSEKWFALPKERLWVTVYESDDEAYEIWEKEVGIPRERIIRIGDNKGAPYASDNFWQMGDTGPCGPCTEIFYDHGDHIWGGPPGSPEEDGDRYIEIWNIVFMQFNRQADGTMEPLPKPSVDTGMGLERIAAVLQHVNSNYDIDLFRTLIQAVAKVTGATDLSNKSLRVIADHIRSCAFLIADGVMPANENRGYVLRRIIRRAVRHGNMLGAKETFFYKLVGPLIDVMGSAGEDLKRQQAQVEQVLKTEEEQFARTLERGLALLDEELAKLSGDTLDGETAFRLYDTYGFPVDLTADVCRERNIKVDEAGFEAAMEEQRRRAREASGFGADYNAMIRVDSASEFKGYDHLELNGKVTALFVDGKAVDAINAGQEAVVVLDQTPFYAESGGQVGDKGELKGANFSFAVEDTQKYGQAIGHIGKLAAGSLKVGDAVQADVDEARRARIRLNHSATHLMHAALRQVLGTHVSQKGSLVNDKVLRFDFSHNEAMKPEEIRAVEDLVNTQIRRNLPIETNIMDLEAAKAKGAMALFGEKYDERVRVLSMGDFSTELCGGTHASRTGDIGLFRIISESGTAAGVRRIEAVTGEGAIATVHADSDRLSEVAHLLKGDSNNLADKVRSVLERTRQLEKELQQLKEQAAAQESANLSSKAIDVNGVKLLVSELSGVEPKMLRTMVDDLKNQLGSTIIVLATVVEGKVSLIAGVSKDVTDRVKAGELIGMVAQQVGGKGGGRPDMAQAGGTDAAALPAALASVKGWVSAKLQ.

Residue Lys74 is modified to N6-acetyllysine. 4 residues coordinate Zn(2+): His564, His568, Cys666, and His670.

Belongs to the class-II aminoacyl-tRNA synthetase family. As to quaternary structure, homotetramer. It depends on Zn(2+) as a cofactor.

It is found in the cytoplasm. It carries out the reaction tRNA(Ala) + L-alanine + ATP = L-alanyl-tRNA(Ala) + AMP + diphosphate. In terms of biological role, catalyzes the attachment of alanine to tRNA(Ala) in a two-step reaction: alanine is first activated by ATP to form Ala-AMP and then transferred to the acceptor end of tRNA(Ala). Also edits incorrectly charged Ser-tRNA(Ala) and Gly-tRNA(Ala) via its editing domain. The sequence is that of Alanine--tRNA ligase from Escherichia coli (strain ATCC 8739 / DSM 1576 / NBRC 3972 / NCIMB 8545 / WDCM 00012 / Crooks).